Consider the following 842-residue polypeptide: Elongation factor 2 (842 aa).

Residues 17–253 (TNVRNMSVIA…LWGDSYFNPK (237 aa)) form the tr-type G domain. GTP is bound by residues 26–33 (AHVDHGKS), 158–161 (NKVD), and 213–215 (SGL). The residue at position 699 (His-699) is a Diphthamide.

This sequence belongs to the TRAFAC class translation factor GTPase superfamily. Classic translation factor GTPase family. EF-G/EF-2 subfamily.

It is found in the cytoplasm. The enzyme catalyses GTP + H2O = GDP + phosphate + H(+). In terms of biological role, catalyzes the GTP-dependent ribosomal translocation step during translation elongation. During this step, the ribosome changes from the pre-translocational (PRE) to the post-translocational (POST) state as the newly formed A-site-bound peptidyl-tRNA and P-site-bound deacylated tRNA move to the P and E sites, respectively. Catalyzes the coordinated movement of the two tRNA molecules, the mRNA and conformational changes in the ribosome. The sequence is that of Elongation factor 2 (EFT1) from Kluyveromyces lactis (strain ATCC 8585 / CBS 2359 / DSM 70799 / NBRC 1267 / NRRL Y-1140 / WM37) (Yeast).